The chain runs to 239 residues: Putative zinc finger protein 132L (239 aa).

The segment at 20 to 40 (DASLSTKSPKREPSQEKEIKK) is disordered. Over residues 28 to 40 (PKREPSQEKEIKK) the composition is skewed to basic and acidic residues. 2 consecutive C3H1-type zinc fingers follow at residues 44–68 (IKKN…HPGE) and 81–106 (RRKT…HDES). Residues 128–151 (PGECKFSHPPPPPPSPPSPPPKEE) are disordered. The segment covering 135-147 (HPPPPPPSPPSPP) has biased composition (pro residues).

This Acheta domesticus (House cricket) protein is Putative zinc finger protein 132L.